The primary structure comprises 94 residues: Integration host factor subunit beta (94 aa).

The protein belongs to the bacterial histone-like protein family. As to quaternary structure, heterodimer of an alpha and a beta chain.

Functionally, this protein is one of the two subunits of integration host factor, a specific DNA-binding protein that functions in genetic recombination as well as in transcriptional and translational control. This is Integration host factor subunit beta from Buchnera aphidicola subsp. Acyrthosiphon pisum (strain 5A).